We begin with the raw amino-acid sequence, 213 residues long: Phosphatidylserine decarboxylase proenzyme (213 aa).

The active-site Schiff-base intermediate with substrate; via pyruvic acid is Ser-182. Ser-182 bears the Pyruvic acid (Ser); by autocatalysis mark.

It belongs to the phosphatidylserine decarboxylase family. PSD-A subfamily. In terms of assembly, heterodimer of a large membrane-associated beta subunit and a small pyruvoyl-containing alpha subunit. The cofactor is pyruvate. Post-translationally, is synthesized initially as an inactive proenzyme. Formation of the active enzyme involves a self-maturation process in which the active site pyruvoyl group is generated from an internal serine residue via an autocatalytic post-translational modification. Two non-identical subunits are generated from the proenzyme in this reaction, and the pyruvate is formed at the N-terminus of the alpha chain, which is derived from the carboxyl end of the proenzyme. The post-translation cleavage follows an unusual pathway, termed non-hydrolytic serinolysis, in which the side chain hydroxyl group of the serine supplies its oxygen atom to form the C-terminus of the beta chain, while the remainder of the serine residue undergoes an oxidative deamination to produce ammonia and the pyruvoyl prosthetic group on the alpha chain.

The protein localises to the cell membrane. The catalysed reaction is a 1,2-diacyl-sn-glycero-3-phospho-L-serine + H(+) = a 1,2-diacyl-sn-glycero-3-phosphoethanolamine + CO2. It functions in the pathway phospholipid metabolism; phosphatidylethanolamine biosynthesis; phosphatidylethanolamine from CDP-diacylglycerol: step 2/2. In terms of biological role, catalyzes the formation of phosphatidylethanolamine (PtdEtn) from phosphatidylserine (PtdSer). This Geotalea uraniireducens (strain Rf4) (Geobacter uraniireducens) protein is Phosphatidylserine decarboxylase proenzyme.